Here is a 257-residue protein sequence, read N- to C-terminus: Thiazole synthase (257 aa).

Catalysis depends on Lys-96, which acts as the Schiff-base intermediate with DXP. Residues Gly-157, Ala-184 to Gly-185, and Asn-206 to Thr-207 contribute to the 1-deoxy-D-xylulose 5-phosphate site.

The protein belongs to the ThiG family. As to quaternary structure, homotetramer. Forms heterodimers with either ThiH or ThiS.

Its subcellular location is the cytoplasm. The catalysed reaction is [ThiS sulfur-carrier protein]-C-terminal-Gly-aminoethanethioate + 2-iminoacetate + 1-deoxy-D-xylulose 5-phosphate = [ThiS sulfur-carrier protein]-C-terminal Gly-Gly + 2-[(2R,5Z)-2-carboxy-4-methylthiazol-5(2H)-ylidene]ethyl phosphate + 2 H2O + H(+). Its pathway is cofactor biosynthesis; thiamine diphosphate biosynthesis. Catalyzes the rearrangement of 1-deoxy-D-xylulose 5-phosphate (DXP) to produce the thiazole phosphate moiety of thiamine. Sulfur is provided by the thiocarboxylate moiety of the carrier protein ThiS. In vitro, sulfur can be provided by H(2)S. The protein is Thiazole synthase of Rhizobium rhizogenes (strain K84 / ATCC BAA-868) (Agrobacterium radiobacter).